The primary structure comprises 152 residues: Small ribosomal subunit protein uS13 (152 aa).

Ser-41 is modified (phosphoserine).

This sequence belongs to the universal ribosomal protein uS13 family.

Its subcellular location is the cytoplasm. Its function is as follows. Located at the top of the head of the 40S subunit, it contacts several helices of the 18S rRNA. The polypeptide is Small ribosomal subunit protein uS13 (RpS18) (Drosophila melanogaster (Fruit fly)).